We begin with the raw amino-acid sequence, 417 residues long: Gamma-glutamyl phosphate reductase (417 aa).

This sequence belongs to the gamma-glutamyl phosphate reductase family.

Its subcellular location is the cytoplasm. It carries out the reaction L-glutamate 5-semialdehyde + phosphate + NADP(+) = L-glutamyl 5-phosphate + NADPH + H(+). Its pathway is amino-acid biosynthesis; L-proline biosynthesis; L-glutamate 5-semialdehyde from L-glutamate: step 2/2. Catalyzes the NADPH-dependent reduction of L-glutamate 5-phosphate into L-glutamate 5-semialdehyde and phosphate. The product spontaneously undergoes cyclization to form 1-pyrroline-5-carboxylate. The protein is Gamma-glutamyl phosphate reductase of Legionella pneumophila subsp. pneumophila (strain Philadelphia 1 / ATCC 33152 / DSM 7513).